Here is a 264-residue protein sequence, read N- to C-terminus: Exodeoxyribonuclease YycJ (264 aa).

Residues H58, H60, D62, H63, and D145 each coordinate a divalent metal cation.

The protein belongs to the metallo-beta-lactamase superfamily. Requires Fe(2+) as cofactor. The cofactor is Zn(2+). Mn(2+) is required as a cofactor.

In terms of biological role, 5'-&gt;3' double-stranded DNA exonuclease. May play a role in mutation mismatch repair (MMR). Required for accurate coordination of cell division with DNA replication. May play a role in cell wall metabolism. In Bacillus anthracis, this protein is Exodeoxyribonuclease YycJ.